A 271-amino-acid polypeptide reads, in one-letter code: Dioscorin dioA3 (271 aa).

An N-terminal signal peptide occupies residues 1–21; sequence MSSSTLLHLLLLSSLLFSCLS. The 235-residue stretch at 28–262 folds into the Alpha-carbonic anhydrase domain; that stretch reads DEFSYIEGNP…TNFRSVFYFE (235 aa). Cysteine 53 and cysteine 212 are disulfide-bonded. Histidine 94 functions as the Proton acceptor in the catalytic mechanism. Residues aspartate 95, 120 to 122, glutamine 139, and 208 to 209 contribute to the L-ascorbate site; these read HFH and TA.

Belongs to the alpha-carbonic anhydrase family. In terms of assembly, monomer. Homodimer. In terms of processing, not glycosylated. Expressed in tuber (at protein level).

The catalysed reaction is hydrogencarbonate + H(+) = CO2 + H2O. The enzyme catalyses 2 monodehydro-L-ascorbate radical + NADH + H(+) = 2 L-ascorbate + NAD(+). Its activity is regulated as follows. The carbonate dehydratase activity is not substantially changed by the addition of Zn(2+). In terms of biological role, storage protein of tuber. Involved in protection against oxidative stress. Has carbonate dehydratase, trypsin inhibitor, dehydroascorbate (DHA) reductase and monodehydroascorbate (MDA) reductase activities. Catalyzes the reactions of carbonate dehydratase and DHA reductase independently of zinc and glutathione (GSH). The coupled reaction is capable of recycling a plant antioxidant ascorbate using ubiquitous compounds H(2)O and CO(2). Exhibits antioxidant activity. Able to scavenge 1,1-diphenyl-2-picrylhydrazyl (DPPH) radical. Exhibits immunomodulatory activity. Activates Toll-like receptor 4 signaling pathways by up-regulating the gene expression of pro-inflammatory cytokines, such as tumor necrosis factor alpha, interleukin-1 beta and interleukin-6, and chemokines RANTES and MCP-1, in mouse RAW 264.7 macrophages. Stimulates the phagocytosis of E.coli by the LPS-treated mouse macrophages. In Dioscorea japonica (Japanese yam), this protein is Dioscorin dioA3.